The chain runs to 484 residues: Ribosome biogenesis protein YTM1 (484 aa).

Positions 11–94 (VKVLFTTTEQ…EKTVTLQYVR (84 aa)) are ubiquitin-like (UBL) domain. WD repeat units follow at residues 121–160 (SSAG…LATS), 166–204 (GPLC…DHFS), 215–254 (GHRS…APEA), 289–329 (VHSR…VVST), 331–372 (TTSN…AATS), 378–418 (GHIN…PAAG), and 448–484 (GEGV…IISS).

It belongs to the WD repeat WDR12/YTM1 family. As to quaternary structure, component of the NOP7 complex, composed of ERB1, NOP7 and YTM1. The complex is held together by ERB1, which interacts with NOP7 via its N-terminal domain and with YTM1 via a high-affinity interaction between the seven-bladed beta-propeller domains of the 2 proteins. The NOP7 complex associates with the 66S pre-ribosome. Interacts (via UBL domain) with MDN1 (via VWFA/MIDAS domain).

The protein resides in the nucleus. It is found in the nucleolus. It localises to the nucleoplasm. In terms of biological role, component of the NOP7 complex, which is required for maturation of the 25S and 5.8S ribosomal RNAs and formation of the 60S ribosome. This Pyricularia oryzae (strain 70-15 / ATCC MYA-4617 / FGSC 8958) (Rice blast fungus) protein is Ribosome biogenesis protein YTM1.